Consider the following 390-residue polypeptide: Transforming growth factor beta-1 proprotein (390 aa).

A signal peptide spans methionine 1–glycine 29. The interval leucine 30–proline 74 is straightjacket domain. Residues glutamate 75–leucine 271 are arm domain. N-linked (GlcNAc...) asparagine glycosylation is found at asparagine 82, asparagine 136, and asparagine 176. A bowtie tail region spans residues aspartate 226–glycine 252. The Cell attachment site signature appears at arginine 244–aspartate 246. Intrachain disulfides connect cysteine 285–cysteine 294, cysteine 293–cysteine 356, cysteine 322–cysteine 387, and cysteine 326–cysteine 389.

The protein belongs to the TGF-beta family. Homodimer; disulfide-linked. Interacts with the serine proteases, HTRA1 and HTRA3: the interaction with either inhibits TGFB1-mediated signaling and the HTRA protease activity is required for this inhibition. May interact with THSD4; this interaction may lead to sequestration by FBN1 microfibril assembly and attenuation of TGFB signaling. Interacts with CD109, DPT and ASPN. Interacts with EFEMP2. Interacts with TSKU; the interaction contributes to regulation of the hair cycle. Interacts with TGFBR3. As to quaternary structure, homodimer; disulfide-linked. Interacts with transforming growth factor beta-1 (TGF-beta-1) chain; interaction is non-covalent and maintains TGF-beta-1 in a latent state; each latency-associated peptide (LAP) monomer interacts with TGF-beta-1 in the other monomer. Interacts with LTBP1; leading to regulation of TGF-beta-1 activation. Interacts with LRRC32/GARP; leading to regulation of TGF-beta-1 activation on the surface of activated regulatory T-cells (Tregs). Interacts with LRRC33/NRROS; leading to regulation of TGF-beta-1 activation in macrophages and microglia. Interacts (via cell attachment site) with integrins ITGAV and ITGB6 (ITGAV:ITGB6), leading to release of the active TGF-beta-1. Latency-associated peptide: Interacts with NREP; the interaction results in a decrease in TGFB1 autoinduction. Interacts with HSP90AB1; inhibits latent TGFB1 activation. In terms of assembly, homodimer; disulfide-linked. Interacts with TGF-beta receptors (TGFBR1 and TGFBR2), leading to signal transduction. Transforming growth factor beta-1 proprotein: The precursor proprotein is cleaved in the Golgi apparatus by FURIN to form Transforming growth factor beta-1 (TGF-beta-1) and Latency-associated peptide (LAP) chains, which remain non-covalently linked, rendering TGF-beta-1 inactive. In terms of processing, N-glycosylated. Deglycosylation leads to activation of Transforming growth factor beta-1 (TGF-beta-1); mechanisms triggering deglycosylation-driven activation of TGF-beta-1 are however unclear.

The protein localises to the secreted. It is found in the extracellular space. It localises to the extracellular matrix. Transforming growth factor beta-1 proprotein: Precursor of the Latency-associated peptide (LAP) and Transforming growth factor beta-1 (TGF-beta-1) chains, which constitute the regulatory and active subunit of TGF-beta-1, respectively. Its function is as follows. Required to maintain the Transforming growth factor beta-1 (TGF-beta-1) chain in a latent state during storage in extracellular matrix. Associates non-covalently with TGF-beta-1 and regulates its activation via interaction with 'milieu molecules', such as LTBP1, LRRC32/GARP and LRRC33/NRROS, that control activation of TGF-beta-1. Interaction with LRRC33/NRROS regulates activation of TGF-beta-1 in macrophages and microglia. Interaction with LRRC32/GARP controls activation of TGF-beta-1 on the surface of activated regulatory T-cells (Tregs). Interaction with integrins (ITGAV:ITGB6 or ITGAV:ITGB8) results in distortion of the Latency-associated peptide chain and subsequent release of the active TGF-beta-1. In terms of biological role, multifunctional protein that regulates the growth and differentiation of various cell types and is involved in various processes, such as normal development, immune function, microglia function and responses to neurodegeneration. Activation into mature form follows different steps: following cleavage of the proprotein in the Golgi apparatus, Latency-associated peptide (LAP) and Transforming growth factor beta-1 (TGF-beta-1) chains remain non-covalently linked rendering TGF-beta-1 inactive during storage in extracellular matrix. At the same time, LAP chain interacts with 'milieu molecules', such as LTBP1, LRRC32/GARP and LRRC33/NRROS that control activation of TGF-beta-1 and maintain it in a latent state during storage in extracellular milieus. TGF-beta-1 is released from LAP by integrins (ITGAV:ITGB6 or ITGAV:ITGB8): integrin-binding to LAP stabilizes an alternative conformation of the LAP bowtie tail and results in distortion of the LAP chain and subsequent release of the active TGF-beta-1. Once activated following release of LAP, TGF-beta-1 acts by binding to TGF-beta receptors (TGFBR1 and TGFBR2), which transduce signal. While expressed by many cells types, TGF-beta-1 only has a very localized range of action within cell environment thanks to fine regulation of its activation by Latency-associated peptide chain (LAP) and 'milieu molecules'. Plays an important role in bone remodeling: acts as a potent stimulator of osteoblastic bone formation, causing chemotaxis, proliferation and differentiation in committed osteoblasts. Can promote either T-helper 17 cells (Th17) or regulatory T-cells (Treg) lineage differentiation in a concentration-dependent manner. At high concentrations, leads to FOXP3-mediated suppression of RORC and down-regulation of IL-17 expression, favoring Treg cell development. At low concentrations in concert with IL-6 and IL-21, leads to expression of the IL-17 and IL-23 receptors, favoring differentiation to Th17 cells. Stimulates sustained production of collagen through the activation of CREB3L1 by regulated intramembrane proteolysis (RIP). Mediates SMAD2/3 activation by inducing its phosphorylation and subsequent translocation to the nucleus. Positively regulates odontoblastic differentiation in dental papilla cells, via promotion of IPO7-mediated translocation of phosphorylated SMAD2 to the nucleus and subsequent transcription of target genes. Can induce epithelial-to-mesenchymal transition (EMT) and cell migration in various cell types. This chain is Transforming growth factor beta-1 proprotein (TGFB1), found in Equus caballus (Horse).